A 266-amino-acid chain; its full sequence is 3',5'-cyclic-nucleotide phosphodiesterase alr5338 (266 aa).

Residues Asp-14, His-16, Asp-56, Asn-86, His-155, His-194, and His-196 each coordinate Fe cation. AMP is bound by residues His-16, Asp-56, and 86 to 87 (NH). Position 196 (His-196) interacts with AMP.

This sequence belongs to the cyclic nucleotide phosphodiesterase class-III family. Fe(2+) serves as cofactor. The cofactor is Mn(2+).

The catalysed reaction is a nucleoside 3',5'-cyclic phosphate + H2O = a nucleoside 5'-phosphate + H(+). It catalyses the reaction 3',5'-cyclic AMP + H2O = AMP + H(+). It carries out the reaction 3',5'-cyclic GMP + H2O = GMP + H(+). Activated by iron and manganese. Hydrolyzes cAMP to 5'-AMP. Plays an important regulatory role in modulating the intracellular concentration of cAMP, thereby influencing cAMP-dependent processes. Can also hydrolyze cGMP. The chain is 3',5'-cyclic-nucleotide phosphodiesterase alr5338 from Nostoc sp. (strain PCC 7120 / SAG 25.82 / UTEX 2576).